A 548-amino-acid chain; its full sequence is Thermostable neutral protease NprT (548 aa).

An N-terminal signal peptide occupies residues 1 to 25; it reads MNKRAMLGAIGLAFGLLAAPIGASA. A propeptide spans 26–229 (activation peptide); it reads KGESIVWNEQ…DSRQPGGGQP (204 aa). Positions 289, 291, 293, and 370 each coordinate Ca(2+). His374 provides a ligand contact to Zn(2+). The active site involves Glu375. Zn(2+)-binding residues include His378 and Glu398. Residues Glu409, Asn415, Asp417, Glu419, Glu422, Tyr425, Thr426, Val429, and Asp432 each contribute to the Ca(2+) site. The Proton donor role is filled by His463.

Belongs to the peptidase M4 family. The cofactor is Ca(2+). Requires Zn(2+) as cofactor.

Its subcellular location is the secreted. Its activity is regulated as follows. Its casein hydrolytic activity is inhibited almost completely by a chelating agent (EDTA), whereas neither diisopropyl fluorophosphate nor phenylmethylsulfonyl fluoride inhibit the proteolytic activity in vitro. In terms of biological role, extracellular zinc metalloprotease. The polypeptide is Thermostable neutral protease NprT (nprT) (Geobacillus stearothermophilus (Bacillus stearothermophilus)).